The sequence spans 297 residues: Non-structural protein VP10 (297 aa).

The chain is Non-structural protein VP10 from Oryza latifolia (Indian wild rice).